Reading from the N-terminus, the 723-residue chain is MSEKQVFSTEWAGKTLSVEVGQLAKQASGAALIRYGDTVVLTAAVGSKKPRPGDFFPLTVNYEEKMYSVGKVPGGFLKREGRPSDRATLTARLIDRPIRPLFAEGFRNEVQITSTVFSVDQDCSPEMAAMLGSSVALVISDIPFEGPIAGVDVGRIDGKYVINPTIEQAEKSDISLTVAGTYDAINMVEAGAKEVSEEAMLEAIMFGHEEIKRLCEFQQQIIAAVGKEKREIELFVSDPELEAEVKAASEGKMKAAIKTEEKKAREAAIEEVKEEILESYKAKELENEAEILGEVAHILEMIEKDEMRRLISQDKIRPDGRKVNEIRPLSSEVGMLPRVHGSGLFTRGQTQALSVCTLAPLREHQIIDGLGTEEYKRFMHHYNFPQFSVGETGPRRAPGRREIGHGALGERALQYVIPSEEEFPYTIRLVSEVLESNGSSSQASICGSTLAMLDAGVPIKAPVAGIAMGLVKLGDDYTILSDIQGMEDHFGDMDFKVAGTKDGITALQMDIKIDGLSRQILDEALTQAKEGRLHILEHLTSTISAPREELSAYAPKIITLNIKPEKIKDVIGPGGKQINAIIDETGVKIDIEQDGTVYIASQDQAMNRKAIAIIEDIVREVEVGEVYTGKVRRIEKFGAFVELFKGTDGLVHISELAHERVGKVEDILKLGDEVTVKVIEVDQQGRVNLSRKALLEKKEQPEGDKKPQAEKKFYPKTKKPESK.

D488 and D494 together coordinate Mg(2+). The KH domain maps to 555–614; sequence PKIITLNIKPEKIKDVIGPGGKQINAIIDETGVKIDIEQDGTVYIASQDQAMNRKAIAII. In terms of domain architecture, S1 motif spans 624-692; that stretch reads GEVYTGKVRR…QQGRVNLSRK (69 aa). Positions 692 to 723 are disordered; that stretch reads KALLEKKEQPEGDKKPQAEKKFYPKTKKPESK. Over residues 693-723 the composition is skewed to basic and acidic residues; that stretch reads ALLEKKEQPEGDKKPQAEKKFYPKTKKPESK.

It belongs to the polyribonucleotide nucleotidyltransferase family. Mg(2+) is required as a cofactor.

The protein localises to the cytoplasm. It catalyses the reaction RNA(n+1) + phosphate = RNA(n) + a ribonucleoside 5'-diphosphate. In terms of biological role, involved in mRNA degradation. Catalyzes the phosphorolysis of single-stranded polyribonucleotides processively in the 3'- to 5'-direction. The polypeptide is Polyribonucleotide nucleotidyltransferase (Listeria monocytogenes serotype 4a (strain HCC23)).